The primary structure comprises 2533 residues: Highly reducing polyketide synthase azaB (2533 aa).

Residues 7–433 (TAPMAIIGMA…GSNAHAILES (427 aa)) enclose the Ketosynthase family 3 (KS3) domain. Active-site for beta-ketoacyl synthase activity residues include C180, H315, and H355. The tract at residues 554–821 (WVFTGQGAQW…VEFESSFRHM (268 aa)) is malonyl-CoA:ACP transacylase (MAT) domain. The N-terminal hotdog fold stretch occupies residues 946–1081 (SDLVGYSQPS…GRISVITTSD (136 aa)). The PKS/mFAS DH domain maps to 946–1254 (SDLVGYSQPS…CQSLGRALDR (309 aa)). Residues 947-1251 (DLVGYSQPSI…GLTCQSLGRA (305 aa)) are dehydratase (DH) domain. The Proton acceptor; for dehydratase activity role is filled by H978. Residues 1097–1254 (YNRRIDPRYM…CQSLGRALDR (158 aa)) form a C-terminal hotdog fold region. The active-site Proton donor; for dehydratase activity is D1163. Positions 1419–1554 (TRQVSELVRL…GGKLILMETT (136 aa)) are methyltransferase (CMet) domain. Residues 1839–2155 (GLIDTLVFHD…TGQHMGKIII (317 aa)) are enoyl reductase (ER) domain. The interval 2178 to 2349 (ASYVIVGGLG…AVSLDLGIVR (172 aa)) is ketoreductase (KR) domain. The 78-residue stretch at 2455 to 2532 (DAAALICQEL…DLSLRVATKR (78 aa)) folds into the Carrier domain. Position 2492 is an O-(pantetheine 4'-phosphoryl)serine (S2492).

It participates in secondary metabolite biosynthesis. Functionally, highly reducing polyketide synthase; part of the gene cluster that mediates the biosynthesis of azaphilones, a class of fungal metabolites characterized by a highly oxygenated pyrano-quinone bicyclic core and exhibiting a broad range of bioactivities. In the first step, the non-reducing polyketide synthase azaA forms the hexaketide precursor from successive condensations of five malonyl-CoA units, presumably with a simple acetyl-CoA starter unit. The reactive polyketide chain then undergoes a PT-mediated C2-C7 cyclization to afford the aromatic ring and is eventually released as an aldehyde through the R-domain. The putative ketoreductase azaE is proposed to catalyze the reduction of the terminal ketone resulting in the early culture product FK17-P2a. The monooxygenase azaH was demonstrated to be the only enzyme required to convert FK17-P2a to azanigerone E. AzaH first hydroxylates the benzaldehyde intermediate FK17-P2a at C4, which triggers the formation of the pyran-ring to afford azanigerone E. In parallel, the 2,4-dimethylhexanoyl chain is synthesized by the HR-PKS azaB and is proposed to be transferred to the C4-hydroxyl of azanigerone E by the acyltransferase azaD directly from the ACP domain of azaB. Alternatively, the 2,4-dimethyl-hexanoyl chain may be offloaded from the HR-PKS as a carboxylic acid and converted to an acyl-CoA by azaF. The resulting acyl-CoA molecule could then be taken up as a substrate by AzaD to form azanigerone B. To yield the carboxylic acid substituent in azanigerone A, the hydroxypropyl side chain of azanigerone B would need to undergo a C-C oxidative cleavage catalyzed by cytochrome P450 AzaI. AzaI is proposed to act on a vicinal diol that leads to a C-C bond scission either through an alkoxyradical intermediate or a peroxy complex. In the biosynthesis of azanigerone A, azanigerone B first undergoes hydroxylation at C10, possibly catalyzed by one of the two FAD-dependent monooxygenases encoded in the cluster, azaG or azaL, resulting in the vicinal diol azanigerone C. Oxidative cleavage of azanigerone C by azaI would yield the corresponding aldehyde derivative of azanigerone A. Finally, the dehydrogenase azaJ is proposed to convert the aldehyde functional group into the carboxylic acid, completing the conversion from azanigerone B to azanigerone A. Alternatively, the oxidation of aldehyde to carboxylic acid may be catalyzed by the same P450 enzyme azaI via consecutive oxidation or by endogenous alcohol dehydrogenase. The sequence is that of Highly reducing polyketide synthase azaB from Aspergillus niger (strain ATCC 1015 / CBS 113.46 / FGSC A1144 / LSHB Ac4 / NCTC 3858a / NRRL 328 / USDA 3528.7).